The chain runs to 175 residues: RNA pyrophosphohydrolase (175 aa).

A Nudix hydrolase domain is found at 6–149 (GYRPNVGIVI…KRDVYRRVMK (144 aa)). Residues 38–59 (GGINPGETPEQAMYRELFEEVG) carry the Nudix box motif.

Belongs to the Nudix hydrolase family. RppH subfamily. It depends on a divalent metal cation as a cofactor.

Accelerates the degradation of transcripts by removing pyrophosphate from the 5'-end of triphosphorylated RNA, leading to a more labile monophosphorylated state that can stimulate subsequent ribonuclease cleavage. This is RNA pyrophosphohydrolase from Yersinia pseudotuberculosis serotype O:1b (strain IP 31758).